The following is a 271-amino-acid chain: Small ribosomal subunit protein uS2 (271 aa).

The disordered stretch occupies residues 235 to 271 (FDAKNPLKPQNYNAPNKRPYQDSPRKPSYQNQNQNQI). The segment covering 262-271 (SYQNQNQNQI) has biased composition (polar residues).

Belongs to the universal ribosomal protein uS2 family.

This chain is Small ribosomal subunit protein uS2, found in Onion yellows phytoplasma (strain OY-M).